The primary structure comprises 1067 residues: Dorsal-ventral patterning protein tolloid (1067 aa).

Positions 1-36 (MKGMRLMPMKMKAKLVVLSVGALWMMMFFLVDYAEG) are cleaved as a signal peptide. Residues 37–136 (RRLSQLPESE…NGQPIQRRRR (100 aa)) constitute a propeptide that is removed on maturation. Residues 136–338 (RAVTVRKERT…VQANLLYKCA (203 aa)) form the Peptidase M12A domain. The N-linked (GlcNAc...) asparagine glycan is linked to Asn-176. 5 cysteine pairs are disulfide-bonded: Cys-179–Cys-337, Cys-201–Cys-223, Cys-203–Cys-204, Cys-340–Cys-390, and Cys-417–Cys-439. Residue His-231 coordinates Zn(2+). The active site involves Glu-232. Zn(2+) is bound by residues His-235 and His-241. 2 short sequence motifs (cell attachment site) span residues 245 to 247 (RGD) and 325 to 327 (RGD). 2 consecutive CUB domains span residues 340 to 477 (CGRT…FEVV) and 478 to 591 (CGGD…LMLD). An N-linked (GlcNAc...) asparagine glycan is attached at Asn-441. 6 cysteine pairs are disulfide-bonded: Cys-478–Cys-505, Cys-532–Cys-554, Cys-595–Cys-606, Cys-602–Cys-615, Cys-617–Cys-630, and Cys-634–Cys-662. Asn-543 is a glycosylation site (N-linked (GlcNAc...) asparagine). The EGF-like 1; calcium-binding domain maps to 591 to 631 (DVDECKFTDHGCQHLCINTLGSYQCGCRAGYELQANGKTCE). The region spanning 634-753 (CGGVVDATKS…SGFVAKFVID (120 aa)) is the CUB 3 domain. Asn-644 and Asn-677 each carry an N-linked (GlcNAc...) asparagine glycan. Intrachain disulfides connect Cys-693–Cys-716, Cys-757–Cys-768, Cys-764–Cys-777, Cys-779–Cys-792, Cys-797–Cys-823, Cys-850–Cys-872, Cys-910–Cys-940, and Cys-967–Cys-989. One can recognise an EGF-like 2; calcium-binding domain in the interval 753 to 793 (DVDECSMNNGGCQHRCRNTFGSYQCSCRNGYTLAENGHNCT). The N-linked (GlcNAc...) asparagine glycan is linked to Asn-791. CUB domains are found at residues 797–909 (CKFE…FVSE) and 910–1026 (CGGY…FMAV). Residues Asn-864 and Asn-918 are each glycosylated (N-linked (GlcNAc...) asparagine).

Zn(2+) is required as a cofactor.

Metalloprotease which cleaves TGF-beta family ligands daw, Actbeta and myo in vitro. Cleavage of daw enhances its signaling activity. Cleaves dorsal-ventral patterning protein sog. Processes sog more efficiently than metalloprotease tld which also cleaves sog. Required for normal dorsal development. TLD may interact physically with DPP-C protein. In Drosophila melanogaster (Fruit fly), this protein is Dorsal-ventral patterning protein tolloid (tld).